A 364-amino-acid polypeptide reads, in one-letter code: Ribosomal RNA large subunit methyltransferase F (364 aa).

The segment at Met1 to Leu28 is disordered.

This sequence belongs to the methyltransferase superfamily. METTL16/RlmF family.

It is found in the cytoplasm. It catalyses the reaction adenosine(1618) in 23S rRNA + S-adenosyl-L-methionine = N(6)-methyladenosine(1618) in 23S rRNA + S-adenosyl-L-homocysteine + H(+). Its function is as follows. Specifically methylates the adenine in position 1618 of 23S rRNA. The protein is Ribosomal RNA large subunit methyltransferase F of Vibrio vulnificus (strain YJ016).